The chain runs to 316 residues: tRNA dimethylallyltransferase (316 aa).

ATP is bound at residue 17–24 (GPTASGKT). 19 to 24 (TASGKT) provides a ligand contact to substrate. Interaction with substrate tRNA stretches follow at residues 42–45 (DSAL), 166–170 (QRLSR), and 247–252 (RCVGYR).

Belongs to the IPP transferase family. As to quaternary structure, monomer. Mg(2+) is required as a cofactor.

It catalyses the reaction adenosine(37) in tRNA + dimethylallyl diphosphate = N(6)-dimethylallyladenosine(37) in tRNA + diphosphate. Functionally, catalyzes the transfer of a dimethylallyl group onto the adenine at position 37 in tRNAs that read codons beginning with uridine, leading to the formation of N6-(dimethylallyl)adenosine (i(6)A). This chain is tRNA dimethylallyltransferase, found in Salmonella enteritidis PT4 (strain P125109).